The chain runs to 155 residues: 6,7-dimethyl-8-ribityllumazine synthase (155 aa).

Residues Phe18, 49 to 51 (ALE), and 75 to 77 (CVI) contribute to the 5-amino-6-(D-ribitylamino)uracil site. Residue 80–81 (ET) coordinates (2S)-2-hydroxy-3-oxobutyl phosphate. His83 (proton donor) is an active-site residue. Residue Asn108 participates in 5-amino-6-(D-ribitylamino)uracil binding. A (2S)-2-hydroxy-3-oxobutyl phosphate-binding site is contributed by Arg122.

It belongs to the DMRL synthase family.

The catalysed reaction is (2S)-2-hydroxy-3-oxobutyl phosphate + 5-amino-6-(D-ribitylamino)uracil = 6,7-dimethyl-8-(1-D-ribityl)lumazine + phosphate + 2 H2O + H(+). Its pathway is cofactor biosynthesis; riboflavin biosynthesis; riboflavin from 2-hydroxy-3-oxobutyl phosphate and 5-amino-6-(D-ribitylamino)uracil: step 1/2. Catalyzes the formation of 6,7-dimethyl-8-ribityllumazine by condensation of 5-amino-6-(D-ribitylamino)uracil with 3,4-dihydroxy-2-butanone 4-phosphate. This is the penultimate step in the biosynthesis of riboflavin. The sequence is that of 6,7-dimethyl-8-ribityllumazine synthase from Bartonella henselae (strain ATCC 49882 / DSM 28221 / CCUG 30454 / Houston 1) (Rochalimaea henselae).